The sequence spans 241 residues: Uridylate kinase (241 aa).

Residue 14 to 17 (KASG) coordinates ATP. An involved in allosteric activation by GTP region spans residues 22–27 (GDQGFG). Glycine 56 serves as a coordination point for UMP. 2 residues coordinate ATP: glycine 57 and arginine 61. UMP-binding positions include aspartate 76 and 137-144 (TGNPFFTT). ATP-binding residues include threonine 164, glutamine 165, tyrosine 170, and aspartate 173.

It belongs to the UMP kinase family. As to quaternary structure, homohexamer.

The protein resides in the cytoplasm. The catalysed reaction is UMP + ATP = UDP + ADP. It functions in the pathway pyrimidine metabolism; CTP biosynthesis via de novo pathway; UDP from UMP (UMPK route): step 1/1. With respect to regulation, allosterically activated by GTP. Inhibited by UTP. Functionally, catalyzes the reversible phosphorylation of UMP to UDP. In Agrobacterium fabrum (strain C58 / ATCC 33970) (Agrobacterium tumefaciens (strain C58)), this protein is Uridylate kinase.